A 435-amino-acid polypeptide reads, in one-letter code: Eukaryotic peptide chain release factor subunit 1 (435 aa).

It belongs to the eukaryotic release factor 1 family. As to quaternary structure, heterodimer of two subunits, one of which binds GTP.

The protein resides in the cytoplasm. Its function is as follows. Directs the termination of nascent peptide synthesis (translation) in response to the termination codons UAA, UAG and UGA. This Polyandrocarpa misakiensis (Tunicate) protein is Eukaryotic peptide chain release factor subunit 1 (ERF1).